A 343-amino-acid polypeptide reads, in one-letter code: UPF0284 protein Msed_0735 (343 aa).

Belongs to the UPF0284 family.

This is UPF0284 protein Msed_0735 from Metallosphaera sedula (strain ATCC 51363 / DSM 5348 / JCM 9185 / NBRC 15509 / TH2).